The sequence spans 591 residues: Aspartate--tRNA ligase (591 aa).

Position 176 (E176) interacts with L-aspartate. Residues 200–203 (QILK) form an aspartate region. R222 is a binding site for L-aspartate. Residues 222–224 (RDE) and Q231 contribute to the ATP site. L-aspartate is bound at residue H450. An ATP-binding site is contributed by E484. R491 contacts L-aspartate. 536–539 (GLDR) contributes to the ATP binding site.

This sequence belongs to the class-II aminoacyl-tRNA synthetase family. Type 1 subfamily. In terms of assembly, homodimer.

Its subcellular location is the cytoplasm. It carries out the reaction tRNA(Asp) + L-aspartate + ATP = L-aspartyl-tRNA(Asp) + AMP + diphosphate. Functionally, catalyzes the attachment of L-aspartate to tRNA(Asp) in a two-step reaction: L-aspartate is first activated by ATP to form Asp-AMP and then transferred to the acceptor end of tRNA(Asp). The protein is Aspartate--tRNA ligase of Listeria monocytogenes serovar 1/2a (strain ATCC BAA-679 / EGD-e).